A 333-amino-acid chain; its full sequence is MKQVVYVASPDSQQIHVWQLGSTGELTLLQTVEVPGQVQPMTINPNQRHLYVGVRPDFGIVSYNIADDGTLTAAGMAPLPGSPTHIGTDLQGRFLFSASYSFNCVSISPIDEHGVVQTPIQQLNDLPAPHSANIDPTNQILLVPCLKEDKVRLFDLSAEGKLTPHAQSDVTVAAGAGPRHMAFHPNQQVAYCVNELNSSVDVYQISNNGQEYKIIQTLDAMPADFTDTCWAADIHITPNGRHLYISDRTASLLGIFSVSEDGREIALVGHHQTEAQPRGFNIDHNGQFLISSGQKSDHIEVYRIDQISGELTTLKRYPVGKGPMWVSILAPRA.

Belongs to the cycloisomerase 2 family.

It catalyses the reaction 6-phospho-D-glucono-1,5-lactone + H2O = 6-phospho-D-gluconate + H(+). It participates in carbohydrate degradation; pentose phosphate pathway; D-ribulose 5-phosphate from D-glucose 6-phosphate (oxidative stage): step 2/3. Its function is as follows. Catalyzes the hydrolysis of 6-phosphogluconolactone to 6-phosphogluconate. This chain is 6-phosphogluconolactonase, found in Yersinia enterocolitica serotype O:8 / biotype 1B (strain NCTC 13174 / 8081).